The sequence spans 102 residues: Large ribosomal subunit protein bL21 (102 aa).

The protein belongs to the bacterial ribosomal protein bL21 family. In terms of assembly, part of the 50S ribosomal subunit. Contacts protein L20.

Its function is as follows. This protein binds to 23S rRNA in the presence of protein L20. This Geobacillus sp. (strain WCH70) protein is Large ribosomal subunit protein bL21.